A 623-amino-acid chain; its full sequence is MAU2 chromatid cohesion factor homolog (623 aa).

TPR repeat units follow at residues 96–129, 451–484, and 491–524; these read FDTASLLAQLHLKTEQSPHAKAMLRRAVELSQNN, GGFYYVQGLHAFHKNSFHEAKRFLRETLKMANAE, and SCSLVLLSHVFLSIGNSKESMNMVTPAMQLASKI.

The protein belongs to the SCC4/mau-2 family. In terms of assembly, interacts with Nipped-B to form the cohesin loading complex.

It localises to the nucleus. The protein resides in the nucleoplasm. Functionally, required for association of the cohesin complex with chromatin during interphase. Plays a role in sister chromatid cohesion and normal progression through prometaphase. The protein is MAU2 chromatid cohesion factor homolog of Drosophila grimshawi (Hawaiian fruit fly).